The sequence spans 288 residues: Light-independent protochlorophyllide reductase iron-sulfur ATP-binding protein (288 aa).

ATP is bound by residues glycine 12 to threonine 17 and lysine 41. Mg(2+) is bound at residue serine 16. Positions 97 and 131 each coordinate [4Fe-4S] cluster. An ATP-binding site is contributed by asparagine 182–arginine 183.

This sequence belongs to the NifH/BchL/ChlL family. As to quaternary structure, homodimer. Protochlorophyllide reductase is composed of three subunits; ChlL, ChlN and ChlB. It depends on [4Fe-4S] cluster as a cofactor.

It catalyses the reaction chlorophyllide a + oxidized 2[4Fe-4S]-[ferredoxin] + 2 ADP + 2 phosphate = protochlorophyllide a + reduced 2[4Fe-4S]-[ferredoxin] + 2 ATP + 2 H2O. It functions in the pathway porphyrin-containing compound metabolism; chlorophyll biosynthesis (light-independent). Its function is as follows. Component of the dark-operative protochlorophyllide reductase (DPOR) that uses Mg-ATP and reduced ferredoxin to reduce ring D of protochlorophyllide (Pchlide) to form chlorophyllide a (Chlide). This reaction is light-independent. The L component serves as a unique electron donor to the NB-component of the complex, and binds Mg-ATP. In Synechocystis sp. (strain ATCC 27184 / PCC 6803 / Kazusa), this protein is Light-independent protochlorophyllide reductase iron-sulfur ATP-binding protein.